We begin with the raw amino-acid sequence, 834 residues long: Transcription intermediary factor 1-beta (834 aa).

At Ala2 the chain carries N-acetylalanine. Residues 13–23 (AATAASAASGS) are compositionally biased toward low complexity. A disordered region spans residues 13–56 (AATAASAASGSPGSGEGSAGGEKRPAASSAAAASAAASSPAGGG). Ser23, Ser26, and Ser30 each carry phosphoserine. A Glycyl lysine isopeptide (Lys-Gly) (interchain with G-Cter in SUMO2) cross-link involves residue Lys35. The segment covering 38–52 (AASSAAAASAAASSP) has biased composition (low complexity). Phosphoserine is present on Ser51. The segment at 66–122 (CGVCRERLRPERDPRLLPCLHSACSACLGPATPAAANNSGDGGSAGDGAMVDCPVCK) adopts an RING-type zinc-finger fold. Lys128 is covalently cross-linked (Glycyl lysine isopeptide (Lys-Gly) (interchain with G-Cter in SUMO2)). Residue Ser139 is modified to Phosphoserine. A B box-type 1 zinc finger spans residues 149–196 (DANQCCTSCEDNAPATSYCVECSEPLCETCVEAHQRVKYTKDHTVRST). Zn(2+)-binding residues include Cys154, Cys157, Cys178, and His182. Lys200 is covalently cross-linked (Glycyl lysine isopeptide (Lys-Gly) (interchain with G-Cter in SUMO2)). The B box-type 2 zinc-finger motif lies at 205–246 (ERTVYCNVHKHEPLVLFCESCDTLTCRDCQLNAHKDHQYQFL). Zn(2+) contacts are provided by Cys210, His213, Cys233, and His238. Residues 247–377 (EDAVRNQRKL…LIYFQLHRAL (131 aa)) are leucine zipper alpha helical coiled-coil region. The interaction with MAGEC2 stretch occupies residues 248 to 377 (DAVRNQRKLL…LIYFQLHRAL (130 aa)). Glycyl lysine isopeptide (Lys-Gly) (interchain with G-Cter in SUMO2) cross-links involve residues Lys255 and Lys262. Lys267 carries the N6-acetyllysine modification. Lys273 participates in a covalent cross-link: Glycyl lysine isopeptide (Lys-Gly) (interchain with G-Cter in SUMO2). Residue Lys305 is modified to N6-acetyllysine; alternate. A Glycyl lysine isopeptide (Lys-Gly) (interchain with G-Cter in SUMO2); alternate cross-link involves residue Lys305. Lys320 participates in a covalent cross-link: Glycyl lysine isopeptide (Lys-Gly) (interchain with G-Cter in SUMO2). Lys341 carries the post-translational modification N6-acetyllysine. Residue Lys367 forms a Glycyl lysine isopeptide (Lys-Gly) (interchain with G-Cter in SUMO2) linkage. Residues 367–371 (KLIYF) form an involved in binding PPP1CA region. Lys378 carries the post-translational modification N6-acetyllysine; alternate. Lys378 participates in a covalent cross-link: Glycyl lysine isopeptide (Lys-Gly) (interchain with G-Cter in SUMO2); alternate. A Glycyl lysine isopeptide (Lys-Gly) (interchain with G-Cter in SUMO1); alternate cross-link involves residue Lys378. Residue Lys408 forms a Glycyl lysine isopeptide (Lys-Gly) (interchain with G-Cter in SUMO2) linkage. The disordered stretch occupies residues 412-480 (ERPGTNSTGP…SRSGEGEVSG (69 aa)). Residue Ser418 is modified to Phosphoserine. Lys435 is covalently cross-linked (Glycyl lysine isopeptide (Lys-Gly) (interchain with G-Cter in SUMO2)). The segment covering 435–444 (KQGSGSSQPM) has biased composition (polar residues). Residues Ser438, Ser440, and Ser454 each carry the phosphoserine modification. Lys469 participates in a covalent cross-link: Glycyl lysine isopeptide (Lys-Gly) (interchain with G-Cter in SUMO2); alternate. Lys469 is covalently cross-linked (Glycyl lysine isopeptide (Lys-Gly) (interchain with G-Cter in SUMO1); alternate). Residue Arg470 is modified to Citrulline. A Phosphoserine modification is found at Ser471. Arg472 is subject to Citrulline. A phosphoserine mark is found at Ser473, Ser479, and Ser489. The segment at 476–513 (GEVSGLLRKVPRVSLERLDLDLTSDSQPPVFKVFPGST) is HP1 box. Residues 481 to 494 (LLRKVPRVSLERLD) carry the PxVxL motif motif. Thr498 carries the phosphothreonine modification. A Phosphoserine modification is found at Ser501. A Glycyl lysine isopeptide (Lys-Gly) (interchain with G-Cter in SUMO2) cross-link involves residue Lys507. Lys554 participates in a covalent cross-link: Glycyl lysine isopeptide (Lys-Gly) (interchain with G-Cter in SUMO2); alternate. A Glycyl lysine isopeptide (Lys-Gly) (interchain with G-Cter in SUMO); alternate cross-link involves residue Lys554. Lys575 is covalently cross-linked (Glycyl lysine isopeptide (Lys-Gly) (interchain with G-Cter in SUMO2)). The interval 581-602 (LTEGPGAEGPRLASPSGSTSSG) is disordered. The residue at position 594 (Ser594) is a Phosphoserine. A PHD-type zinc finger spans residues 625–672 (ATICRVCQKPGDLVMCNQCEFCFHLDCHLPALQDVPGEEWSCSLCHVL). A Glycyl lysine isopeptide (Lys-Gly) (interchain with G-Cter in SUMO) cross-link involves residue Lys676. 3 positions are modified to phosphoserine: Ser683, Ser689, and Ser697. One can recognise a Bromo domain in the interval 695-799 (KLSPANQRKC…RFFETRMNDA (105 aa)). Lys750 is covalently cross-linked (Glycyl lysine isopeptide (Lys-Gly) (interchain with G-Cter in SUMO2); alternate). A Glycyl lysine isopeptide (Lys-Gly) (interchain with G-Cter in SUMO1); alternate cross-link involves residue Lys750. Residue Lys750 forms a Glycyl lysine isopeptide (Lys-Gly) (interchain with G-Cter in SUMO); alternate linkage. Ser752 is modified (phosphoserine). Position 755 is a phosphotyrosine (Tyr755). At Ser757 the chain carries Phosphoserine. N6-acetyllysine; alternate occurs at positions 770, 774, and 779. Residues Lys770, Lys774, and Lys779 each participate in a glycyl lysine isopeptide (Lys-Gly) (interchain with G-Cter in SUMO2); alternate cross-link. Lys779 is covalently cross-linked (Glycyl lysine isopeptide (Lys-Gly) (interchain with G-Cter in SUMO1); alternate). Ser784 carries the phosphoserine modification. Lys804 is covalently cross-linked (Glycyl lysine isopeptide (Lys-Gly) (interchain with G-Cter in SUMO2)). Residue Ser824 is modified to Phosphoserine; by ATM and ATR and dsDNA kinase.

It belongs to the TRIM/RBCC family. Oligomer; the RBCC domain homotrimerizes and interacts with one molecule of KRAB to form the KRAB-KAP1 corepressor complex. Interacts with SETX. Binding to a KRAB domain is an absolute requirement for silencing gene expression. Interacts with a number of KRAB-ZFP proteins including ZNF10, ZFP53, ZFP68, ZNF382 and ZNF256. Interacts with NCOR1, NR3C1 and CHD3. Interacts with CEBPB (via the RING-type and PHD-type zinc fingers). Interacts with CBX5 (via the PxVxL motif); the interaction occurs in interphase nuclei and competes for binding POGZ. Interacts with POGZ; the interaction competes for interaction with CBX5. Interacts with SETDB1; the interaction is enhanced by KAP1 sumoylation, stimulates SETDB1 histone methyltransferase activity and gene silencing. Interacts (via the PHD-type zinc finger) with UBE2I; the interaction is required for sumoylation and repressor activity. Component of the TRIM28/KAP1-ERBB4-MDM2 complex involved in connecting growth factor and DNA damage responses. Interacts directly with ERBB4; the interaction represses ERBB4-mediated transcription activity. Interacts with MDM2; the interaction contributes to p53/TP53 inactivation. Component of the TRIM28/KAP1-MDM2-p53/TP53; involved in regulating p53/TP53 stabilization and activity. Interacts (via the leucine zipper alpha helical coiled-coil) with E2F1 (central region); the interaction inhibits E2F1 acetylation and transcriptional activity. Interacts with PPP1CA; the interaction dephosphorylates TRIM28 at Ser-824 and forms a complex at the p21 promoter site. Interacts with PPP1CB; the interaction is weak but is increased on dephosphorylation at Ser-824. Interacts with CEBPB and NR3C1. Interacts with CBX5 (via the PxVxL motif); the interaction occurs in interphase nuclei and competes for binding POGZ. Component of a ternary complex that includes TRIM28, a HP1 protein (CBX1, CBX3 OR CBX5), a KRAB domain-containing protein, and DNA. Interacts with SMARCAD1. Interacts with, and sumoylates IRF7. Interacts with MAGEC2. Part of a complex composed of TRIM28, HDAC1, HDAC2 and EHMT2. Interacts (via the RBCC domain) with KOX1 (via the KRAB domain), ZNF268 (via the KRAB domain) and ZNF300 (via the KRAB domain); the interactions increase KOX1, ZNF268 and ZNF300 nuclear localization activities. Interacts with AICDA. The large PER complex involved in the histone methylation is composed of at least PER2, CBX3, TRIM28, SUV39H1 and/or SUV39H2; CBX3 mediates the formation of the complex. Interacts with NR4A3; the interactions potentiates NR4A3 activity on NurRE promoter. Interacts (unphosphorylated or phosphorylated form) with ZBTB1 (via BTB domain). Probably part of a corepressor complex containing ZNF304, TRIM28, SETDB1 and DNMT1. Interacts with ATRX. Forms a complex with ATRX, SETDB1 and ZNF274. Interacts with ZFP568; the interaction mediates ZFP568 transcriptional repression activity. Interacts with RRP1B. Interacts with CRY1. Interacts with ZNF263; recruited to the SIX3 promoter along with other proteins involved in chromatin modification and transcriptional corepression where it contributes to transcriptional repression. Interacts with CYREN (via XLF motif). Interacts with TRIM17; this interaction prevents TRIM28 activity. Interacts with ZNF746. Interacts with PHF13. Interacts with ZNF354C. Interacts with ZNF432; the interaction is independent of PARP1. ATM-induced phosphorylation on Ser-824 represses sumoylation leading to the de-repression of expression of a subset of genes involved in cell cycle control and apoptosis in response to genotoxic stress. Dephosphorylation by the phosphatases, PPP1CA and PP1CB forms, allows sumoylation and expression of TRIM28 target genes. Post-translationally, sumoylation/desumoylation events regulate TRIM28-mediated transcriptional repression. Sumoylation is required for interaction with CHD3 and SETDB1 and the corepressor activity. Represses and is repressed by Ser-824 phosphorylation. Enhances the TRIM28 corepressor activity, inhibiting transcriptional activity of a number of genes including GADD45A and CDKN1A/p21. Lys-554, Lys-779 and Lys-804 are the major sites of sumoylation. In response to Dox-induced DNA damage, enhanced phosphorylation on Ser-824 prevents sumoylation and allows de-repression of CDKN1A/p21. In terms of processing, auto-ubiquitinated; enhanced by MAGEA2 and MAGEC2. Citrullinated by PADI4. Post-translationally, ADP-ribosylated by SIRT6, promoting TRIM28/KAP1 interaction with CBX5, thereby contributing to the packaging of LINE-1 retrotransposon elements into transcriptionally repressive heterochromatin.

Its subcellular location is the nucleus. The catalysed reaction is S-ubiquitinyl-[E2 ubiquitin-conjugating enzyme]-L-cysteine + [acceptor protein]-L-lysine = [E2 ubiquitin-conjugating enzyme]-L-cysteine + N(6)-ubiquitinyl-[acceptor protein]-L-lysine.. It functions in the pathway protein modification; protein sumoylation. Nuclear corepressor for KRAB domain-containing zinc finger proteins (KRAB-ZFPs). Mediates gene silencing by recruiting CHD3, a subunit of the nucleosome remodeling and deacetylation (NuRD) complex, and SETDB1 (which specifically methylates histone H3 at 'Lys-9' (H3K9me)) to the promoter regions of KRAB target genes. Enhances transcriptional repression by coordinating the increase in H3K9me, the decrease in histone H3 'Lys-9 and 'Lys-14' acetylation (H3K9ac and H3K14ac, respectively) and the disposition of HP1 proteins to silence gene expression. Recruitment of SETDB1 induces heterochromatinization. May play a role as a coactivator for CEBPB and NR3C1 in the transcriptional activation of ORM1. Also a corepressor for ERBB4. Inhibits E2F1 activity by stimulating E2F1-HDAC1 complex formation and inhibiting E2F1 acetylation. May serve as a partial backup to prevent E2F1-mediated apoptosis in the absence of RB1. Important regulator of CDKN1A/p21(CIP1). Has E3 SUMO-protein ligase activity toward itself via its PHD-type zinc finger. Specifically sumoylates IRF7, thereby inhibiting its transactivation activity. Ubiquitinates p53/TP53 leading to its proteasomal degradation; the function is enhanced by MAGEC2 and MAGEA2, and possibly MAGEA3 and MAGEA6. Mediates the nuclear localization of KOX1, ZNF268 and ZNF300 transcription factors. Probably forms a corepressor complex required for activated KRAS-mediated promoter hypermethylation and transcriptional silencing of tumor suppressor genes (TSGs) or other tumor-related genes in colorectal cancer (CRC) cells. Required to maintain a transcriptionally repressive state of genes in undifferentiated embryonic stem cells (ESCs). In ESCs, in collaboration with SETDB1, is also required for H3K9me3 and silencing of endogenous and introduced retroviruses in a DNA-methylation independent-pathway. Associates at promoter regions of tumor suppressor genes (TSGs) leading to their gene silencing. The SETDB1-TRIM28-ZNF274 complex may play a role in recruiting ATRX to the 3'-exons of zinc-finger coding genes with atypical chromatin signatures to establish or maintain/protect H3K9me3 at these transcriptionally active regions. Acts as a corepressor for ZFP568. This chain is Transcription intermediary factor 1-beta, found in Mus musculus (Mouse).